We begin with the raw amino-acid sequence, 161 residues long: Protein-export protein SecB (161 aa).

The protein belongs to the SecB family. In terms of assembly, homotetramer, a dimer of dimers. One homotetramer interacts with 1 SecA dimer.

The protein resides in the cytoplasm. Functionally, one of the proteins required for the normal export of preproteins out of the cell cytoplasm. It is a molecular chaperone that binds to a subset of precursor proteins, maintaining them in a translocation-competent state. It also specifically binds to its receptor SecA. The protein is Protein-export protein SecB of Methylocella silvestris (strain DSM 15510 / CIP 108128 / LMG 27833 / NCIMB 13906 / BL2).